Reading from the N-terminus, the 172-residue chain is Large ribosomal subunit protein bL9 (172 aa).

It belongs to the bacterial ribosomal protein bL9 family.

In terms of biological role, binds to the 23S rRNA. The polypeptide is Large ribosomal subunit protein bL9 (Chlamydia caviae (strain ATCC VR-813 / DSM 19441 / 03DC25 / GPIC) (Chlamydophila caviae)).